The following is a 116-amino-acid chain: Large ribosomal subunit protein bL17 (116 aa).

The protein belongs to the bacterial ribosomal protein bL17 family. Part of the 50S ribosomal subunit. Contacts protein L32.

The protein is Large ribosomal subunit protein bL17 of Deinococcus geothermalis (strain DSM 11300 / CIP 105573 / AG-3a).